We begin with the raw amino-acid sequence, 137 residues long: Acidic phospholipase A2 1 (137 aa).

The signal sequence occupies residues 1-11; the sequence is LVAVCVSLLGA. Positions 12-19 are excised as a propeptide; the sequence is ANIPPQPL. Intrachain disulfides connect cysteine 30-cysteine 89, cysteine 44-cysteine 136, cysteine 46-cysteine 62, cysteine 61-cysteine 117, cysteine 68-cysteine 110, cysteine 78-cysteine 103, and cysteine 96-cysteine 108. Residues tyrosine 45, glycine 47, and glycine 49 each contribute to the Ca(2+) site. Residues glycine 49 and histidine 65 each contribute to the tridecanoate site. Residue histidine 65 is part of the active site. Aspartate 66 contributes to the Ca(2+) binding site. The active site involves aspartate 111.

In terms of assembly, monomer. It depends on Ca(2+) as a cofactor. Expressed by the venom gland.

Its subcellular location is the secreted. It catalyses the reaction a 1,2-diacyl-sn-glycero-3-phosphocholine + H2O = a 1-acyl-sn-glycero-3-phosphocholine + a fatty acid + H(+). In terms of biological role, snake venom phospholipase A2 (PLA2) that shows anticoagulant and neurotoxic activities. PLA2 catalyzes the calcium-dependent hydrolysis of the 2-acyl groups in 3-sn-phosphoglycerides. The chain is Acidic phospholipase A2 1 from Bungarus caeruleus (Indian krait).